Reading from the N-terminus, the 388-residue chain is Xylose isomerase (388 aa).

Active-site residues include His54 and Asp57. Mg(2+) is bound by residues Glu181, Glu217, His220, Asp245, Asp255, Asp257, and Asp287.

This sequence belongs to the xylose isomerase family. Homotetramer. Mg(2+) is required as a cofactor.

It is found in the cytoplasm. The enzyme catalyses alpha-D-xylose = alpha-D-xylulofuranose. This chain is Xylose isomerase, found in Streptomyces corchorusii (Streptomyces chibaensis).